We begin with the raw amino-acid sequence, 212 residues long: Large ribosomal subunit protein uL3 (212 aa).

Residues 136 to 155 form a disordered region; that stretch reads THGNSVSHRVLGSTGQNQTP. An N5-methylglutamine modification is found at Q153.

Belongs to the universal ribosomal protein uL3 family. As to quaternary structure, part of the 50S ribosomal subunit. Forms a cluster with proteins L14 and L19. In terms of processing, methylated by PrmB.

In terms of biological role, one of the primary rRNA binding proteins, it binds directly near the 3'-end of the 23S rRNA, where it nucleates assembly of the 50S subunit. This chain is Large ribosomal subunit protein uL3, found in Acinetobacter baumannii (strain AB307-0294).